The following is a 268-amino-acid chain: Undecaprenyl-diphosphatase (268 aa).

A run of 8 helical transmembrane segments spans residues Phe11–Ile33, Phe46–Leu66, Leu84–Ile104, Val107–Leu127, Tyr144–Val164, Ala185–Phe205, Phe213–Val233, and Phe246–Ile266.

The protein belongs to the UppP family.

It localises to the cell inner membrane. The catalysed reaction is di-trans,octa-cis-undecaprenyl diphosphate + H2O = di-trans,octa-cis-undecaprenyl phosphate + phosphate + H(+). In terms of biological role, catalyzes the dephosphorylation of undecaprenyl diphosphate (UPP). Confers resistance to bacitracin. This Brucella suis (strain ATCC 23445 / NCTC 10510) protein is Undecaprenyl-diphosphatase.